We begin with the raw amino-acid sequence, 296 residues long: Tubulin polyglutamylase complex subunit 2 (296 aa).

Basic residues predominate over residues 254–265 (SKNKILIPKKKG). The segment at 254–296 (SKNKILIPKKKGPVPPASGQKGPGPLPPPTSKPTTGSGNPVRK) is disordered. The segment covering 285-296 (KPTTGSGNPVRK) has biased composition (low complexity).

As to quaternary structure, part of the neuronal tubulin polyglutamylase complex which contains TPGS1, TPGS2, TTLL1, LRRC49 and NICN1. Interacts with CSTPP1 and LRRC49.

The protein localises to the cytoplasm. Its subcellular location is the cytoskeleton. It localises to the microtubule organizing center. It is found in the centrosome. The protein resides in the centriolar satellite. Subunit of the tubulin polyglutamylase complex (TPGC). The complex mediates cilia and flagella polyglutamylation which is essential for their biogenesis and motility. In Mus musculus (Mouse), this protein is Tubulin polyglutamylase complex subunit 2 (Tpgs2).